The sequence spans 211 residues: PITH domain-containing protein 1 (211 aa).

In terms of domain architecture, PITH spans 20 to 192 (EPPEQRGLAY…EVTICNYEAS (173 aa)). At tyrosine 189 the chain carries Phosphotyrosine.

It belongs to the PITHD1 family. As to expression, down-regulated in primary acute myeloid leukemia (AML) patients.

Its subcellular location is the cytoplasm. Promotes megakaryocyte differentiation by up-regulating RUNX1 expression. Regulates RUNX1 expression by activating the proximal promoter of the RUNX1 gene and by enhancing the translation activity of an internal ribosome entry site (IRES) element in the RUNX1 gene. This chain is PITH domain-containing protein 1 (PITHD1), found in Homo sapiens (Human).